Here is a 902-residue protein sequence, read N- to C-terminus: Probable dipeptidyl-aminopeptidase B (902 aa).

2 disordered regions span residues 1-23 (MTRR…LSVD) and 53-72 (DAEA…KLGS). Residues 1–78 (MTRRRSTSGT…KLGSGSRTRQ (78 aa)) are Cytoplasmic-facing. The span at 7–21 (TSGTSSRSSTDSGLS) shows a compositional bias: low complexity. Residues 79–99 (IFWALVILCLGGWVLALVLFL) form a helical; Signal-anchor for type II membrane protein membrane-spanning segment. The Vacuolar segment spans residues 100–902 (THGRASSQTA…VKRSVPAFAH (803 aa)). N-linked (GlcNAc...) asparagine glycans are attached at residues asparagine 335 and asparagine 626. Residue serine 740 is the Charge relay system of the active site. 2 N-linked (GlcNAc...) asparagine glycosylation sites follow: asparagine 794 and asparagine 799. Active-site charge relay system residues include aspartate 817 and histidine 850.

This sequence belongs to the peptidase S9B family.

It localises to the vacuole membrane. The enzyme catalyses Release of an N-terminal dipeptide, Xaa-Yaa-|-Zaa-, from a polypeptide, preferentially when Yaa is Pro, provided Zaa is neither Pro nor hydroxyproline.. In terms of biological role, type IV dipeptidyl-peptidase which removes N-terminal dipeptides sequentially from polypeptides having unsubstituted N-termini provided that the penultimate residue is proline. The protein is Probable dipeptidyl-aminopeptidase B (dapB) of Aspergillus oryzae (strain ATCC 42149 / RIB 40) (Yellow koji mold).